We begin with the raw amino-acid sequence, 572 residues long: Proline--tRNA ligase (572 aa).

This sequence belongs to the class-II aminoacyl-tRNA synthetase family. ProS type 1 subfamily. Homodimer.

It localises to the cytoplasm. It catalyses the reaction tRNA(Pro) + L-proline + ATP = L-prolyl-tRNA(Pro) + AMP + diphosphate. In terms of biological role, catalyzes the attachment of proline to tRNA(Pro) in a two-step reaction: proline is first activated by ATP to form Pro-AMP and then transferred to the acceptor end of tRNA(Pro). As ProRS can inadvertently accommodate and process non-cognate amino acids such as alanine and cysteine, to avoid such errors it has two additional distinct editing activities against alanine. One activity is designated as 'pretransfer' editing and involves the tRNA(Pro)-independent hydrolysis of activated Ala-AMP. The other activity is designated 'posttransfer' editing and involves deacylation of mischarged Ala-tRNA(Pro). The misacylated Cys-tRNA(Pro) is not edited by ProRS. In Buchnera aphidicola subsp. Acyrthosiphon pisum (strain APS) (Acyrthosiphon pisum symbiotic bacterium), this protein is Proline--tRNA ligase.